We begin with the raw amino-acid sequence, 820 residues long: G-type lectin S-receptor-like serine/threonine-protein kinase At1g11300 (820 aa).

The first 26 residues, 1–26 (MRLHESSSPFVCILVLSCFFLSVSLA), serve as a signal peptide directing secretion. The Bulb-type lectin domain occupies 27-150 (QERAFFSGKL…SSDAYLWESF (124 aa)). Over 27–436 (QERAFFSGKL…SEIKTKDKRP (410 aa)) the chain is Extracellular. N-linked (GlcNAc...) asparagine glycosylation is found at Asn-37, Asn-58, Asn-87, Asn-115, Asn-123, Asn-173, Asn-211, Asn-247, Asn-256, and Asn-282. One can recognise an EGF-like; atypical domain in the interval 290-326 (PATECDNYRRCGEFATCNPRKNPLCSCIRGFRPRNLI). Intrachain disulfides connect Cys-294–Cys-306 and Cys-300–Cys-314. 2 N-linked (GlcNAc...) asparagine glycosylation sites follow: Asn-332 and Asn-351. The PAN domain maps to 345–425 (CERQNNNGSA…SGLDLYIRLA (81 aa)). 2 disulfides stabilise this stretch: Cys-379/Cys-400 and Cys-383/Cys-389. Residue Asn-404 is glycosylated (N-linked (GlcNAc...) asparagine). The helical transmembrane segment at 437–457 (ILIGTILAGGIFVVAACVLLA) threads the bilayer. Over 458 to 820 (RRIVMKKRAK…NVTITDVTGR (363 aa)) the chain is Cytoplasmic. The region spanning 509 to 788 (FSLRNKLGQG…DIPEPKQPAF (280 aa)) is the Protein kinase domain. ATP is bound by residues 515-523 (LGQGGFGPV) and Lys-537. A caM-binding region spans residues 598–615 (RRAKLLDWKTRFNIINGI). The Proton acceptor role is filled by Asp-634.

This sequence belongs to the protein kinase superfamily. Ser/Thr protein kinase family.

It is found in the cell membrane. It carries out the reaction L-seryl-[protein] + ATP = O-phospho-L-seryl-[protein] + ADP + H(+). It catalyses the reaction L-threonyl-[protein] + ATP = O-phospho-L-threonyl-[protein] + ADP + H(+). This is G-type lectin S-receptor-like serine/threonine-protein kinase At1g11300 from Arabidopsis thaliana (Mouse-ear cress).